The sequence spans 220 residues: MKRSASDSPLLFDIPLAPDFSEEKRLLARGLKHIVGIDEAGRGPLAGPVVAAAVVLDIDNLPNGLDDSKRLTAVKREALYETILEKAITVSVASLSARSIDASDIRKAALEAMRRASVGLTLQPCHALIDGRDVPPGLPCPGSALVKGDQRSVSIAAASIVAKVTRDRMMIRAGAAHPPYGLEIHAGYATVKHRAAIETTGPVPGIHRYTFAPIKGRYSV.

The 189-residue stretch at 32–220 (KHIVGIDEAG…FAPIKGRYSV (189 aa)) folds into the RNase H type-2 domain. The a divalent metal cation site is built by D38, E39, and D130.

Belongs to the RNase HII family. Requires Mn(2+) as cofactor. It depends on Mg(2+) as a cofactor.

The protein localises to the cytoplasm. It carries out the reaction Endonucleolytic cleavage to 5'-phosphomonoester.. Its function is as follows. Endonuclease that specifically degrades the RNA of RNA-DNA hybrids. In Brucella anthropi (strain ATCC 49188 / DSM 6882 / CCUG 24695 / JCM 21032 / LMG 3331 / NBRC 15819 / NCTC 12168 / Alc 37) (Ochrobactrum anthropi), this protein is Ribonuclease HII.